The primary structure comprises 305 residues: Ribosomal RNA small subunit methyltransferase H (305 aa).

Residues 33–35 (GGY), Asp-51, Phe-78, Asp-96, and Gln-103 contribute to the S-adenosyl-L-methionine site.

The protein belongs to the methyltransferase superfamily. RsmH family.

It is found in the cytoplasm. The enzyme catalyses cytidine(1402) in 16S rRNA + S-adenosyl-L-methionine = N(4)-methylcytidine(1402) in 16S rRNA + S-adenosyl-L-homocysteine + H(+). In terms of biological role, specifically methylates the N4 position of cytidine in position 1402 (C1402) of 16S rRNA. The chain is Ribosomal RNA small subunit methyltransferase H from Rickettsia bellii (strain RML369-C).